Here is a 154-residue protein sequence, read N- to C-terminus: Superoxide dismutase [Cu-Zn] (154 aa).

Positions 47, 49, and 64 each coordinate Cu cation. A disulfide bridge links Cys-58 with Cys-147. Residues His-64, His-72, His-81, and Asp-84 each coordinate Zn(2+). A Cu cation-binding site is contributed by His-121. The span at Asp-125–Lys-137 shows a compositional bias: basic and acidic residues. Residues Asp-125–Arg-144 form a disordered region. A substrate-binding site is contributed by Arg-144.

Belongs to the Cu-Zn superoxide dismutase family. In terms of assembly, homodimer. Cu cation is required as a cofactor. Requires Zn(2+) as cofactor.

The protein resides in the cytoplasm. The enzyme catalyses 2 superoxide + 2 H(+) = H2O2 + O2. Destroys radicals which are normally produced within the cells and which are toxic to biological systems. The protein is Superoxide dismutase [Cu-Zn] (sodC) of Aspergillus oryzae (strain ATCC 42149 / RIB 40) (Yellow koji mold).